The following is a 132-amino-acid chain: Small ribosomal subunit protein uS8 (132 aa).

It belongs to the universal ribosomal protein uS8 family. As to quaternary structure, part of the 30S ribosomal subunit. Contacts proteins S5 and S12.

Its function is as follows. One of the primary rRNA binding proteins, it binds directly to 16S rRNA central domain where it helps coordinate assembly of the platform of the 30S subunit. This is Small ribosomal subunit protein uS8 from Desulforamulus reducens (strain ATCC BAA-1160 / DSM 100696 / MI-1) (Desulfotomaculum reducens).